The following is a 326-amino-acid chain: UPF0324 membrane protein PBPRB0970 (326 aa).

Transmembrane regions (helical) follow at residues 27-49 (FFIIALLCLLPIISSPVALILGF), 70-89 (LLAYSIIGLGFGIHLDQAIA), 94-116 (GFGLIVGSIFFTLIFGWFLTKAL), 123-145 (GHLIASGTAICGGSAIAAVAPAI), 155-177 (ALATVFVLNSIALFIFPAIGHLL), 184-206 (FGTWAAIAIHDTSSVVGAAGAYG), 216-235 (IKLARALWIVPIAFLSALLF), 242-261 (IGIPYFILFYCLAIVFAHFV), 271-290 (IFVASKRLLVVCLFLIGSGI), and 303-325 (LLLGVLLWVAIGVGSLSYILLNV).

The protein belongs to the UPF0324 family.

The protein localises to the cell membrane. The chain is UPF0324 membrane protein PBPRB0970 from Photobacterium profundum (strain SS9).